The sequence spans 398 residues: GTPase Obg (398 aa).

Residues 1–159 enclose the Obg domain; the sequence is MKFVDEAPIS…RNLKLELKVL (159 aa). The disordered stretch occupies residues 128-148; the sequence is TRFKSSTNRVPRKTTPGTEGE. Residues 160–333 enclose the OBG-type G domain; that stretch reads ADVGMLGLPN…LSGKIMDHLE (174 aa). GTP is bound by residues 166-173, 191-195, 213-216, 283-286, and 314-316; these read GLPNAGKS, FTTLV, DIPG, NKID, and SAL. Mg(2+) is bound by residues serine 173 and threonine 193.

This sequence belongs to the TRAFAC class OBG-HflX-like GTPase superfamily. OBG GTPase family. In terms of assembly, monomer. The cofactor is Mg(2+).

The protein resides in the cytoplasm. An essential GTPase which binds GTP, GDP and possibly (p)ppGpp with moderate affinity, with high nucleotide exchange rates and a fairly low GTP hydrolysis rate. Plays a role in control of the cell cycle, stress response, ribosome biogenesis and in those bacteria that undergo differentiation, in morphogenesis control. The sequence is that of GTPase Obg from Cellvibrio japonicus (strain Ueda107) (Pseudomonas fluorescens subsp. cellulosa).